The following is a 1337-amino-acid chain: ABC transporter D family member 1 (1337 aa).

4 helical membrane passes run isoleucine 24–valine 44, alanine 142–leucine 162, tyrosine 247–isoleucine 267, and phenylalanine 342–serine 362. Residues valine 117–leucine 395 enclose the ABC transmembrane type-1 1 domain. Residues valine 448–alanine 695 enclose the ABC transporter 1 domain. ATP is bound at residue glycine 481 to serine 488. The region spanning leucine 751–glycine 1049 is the ABC transmembrane type-1 2 domain. A helical transmembrane segment spans residues leucine 900–phenylalanine 920. In terms of domain architecture, ABC transporter 2 spans leucine 1091–glutamate 1337. Glycine 1130–threonine 1137 lines the ATP pocket.

This sequence belongs to the ABC transporter superfamily. ABCD family. Peroxisomal fatty acyl CoA transporter (TC 3.A.1.203) subfamily.

It localises to the peroxisome membrane. Its subcellular location is the glyoxysome membrane. The enzyme catalyses an acyl-CoA(out) + ATP + H2O = an acyl-CoA(in) + ADP + phosphate + H(+). In terms of biological role, contributes to the transport of fatty acids and their derivatives (acyl CoAs) across the peroxisomal membrane. Provides acetate to the glyoxylate cycle in developing seedlings. Involved in pollen tube elongation, ovule fertilization, and seeds germination after imbibition (controls the switch between the opposing developmental programs of dormancy and germination), probably by promoting beta-oxidation of storage lipids during gluconeogenesis. Required for biosynthesis of jasmonic acid and conversion of indole butyric acid to indole acetic acid. Confers sensitivity to monofluoroacetic acid (FAc), a toxic acetate analog, and to 2,4-dichlorophenoxybutyric acid (2,4-DB) and indole-3-butyric acid (IBA), two precursors of auxin after beta-oxidation. The protein is ABC transporter D family member 1 of Arabidopsis thaliana (Mouse-ear cress).